A 142-amino-acid chain; its full sequence is MRLLGLDVGSKTIGVAVSDPLGITAQAVMTIPIDEDRHNFGMRSLKKLVREYEANGFVLGLPKNMDGTAGRSVSRSKAMGERLEQKFGLPVYYDDERLTTVASERILVEEAGMHDRRQRKEVVDQMAAVLILQNYLDLQRKE.

It belongs to the YqgF nuclease family.

The protein resides in the cytoplasm. Its function is as follows. Could be a nuclease involved in processing of the 5'-end of pre-16S rRNA. The sequence is that of Putative pre-16S rRNA nuclease from Lactobacillus delbrueckii subsp. bulgaricus (strain ATCC BAA-365 / Lb-18).